A 570-amino-acid chain; its full sequence is Periplasmic trehalase (570 aa).

A signal peptide spans 1-34 (MITPALRHSGTLSFAIKLTVASTLLTFASLSAHA). Substrate-binding positions include Arg157, 164-165 (WD), Asn201, 210-212 (RSQ), 282-284 (RPE), and Gly315. Catalysis depends on proton donor/acceptor residues Asp317 and Glu501. Glu516 contributes to the substrate binding site. The interval 542 to 570 (KPCDSVPATRPAAPGASQPAPQKQVETTP) is disordered. The segment covering 552–570 (PAAPGASQPAPQKQVETTP) has biased composition (low complexity).

The protein belongs to the glycosyl hydrolase 37 family. Monomer.

Its subcellular location is the periplasm. The enzyme catalyses alpha,alpha-trehalose + H2O = alpha-D-glucose + beta-D-glucose. Provides the cells with the ability to utilize trehalose at high osmolarity by splitting it into glucose molecules that can subsequently be taken up by the phosphotransferase-mediated uptake system. This Citrobacter koseri (strain ATCC BAA-895 / CDC 4225-83 / SGSC4696) protein is Periplasmic trehalase.